Consider the following 234-residue polypeptide: MTKISKRMASLSSKIEDRAYPPLEAINLVKESSTAKFDETIEAHVRLGIDPKYTDQQIRTTVTLPNGTGQTIRIAVIARGEKVAEAKSAGADLAGEEELVDSISKGEMGFDLLIATPDMMPKVAKLGRVLGPRGLMPNPKTGTVTADLVGAIKEFKAGKLEFRADKAGIIHVRFGKASFNADALLENLKTLQETIDRNKPSGAKGRFWKTLYITSTMGPSIEVDIAALQDISQE.

Belongs to the universal ribosomal protein uL1 family. As to quaternary structure, part of the 50S ribosomal subunit.

Functionally, binds directly to 23S rRNA. The L1 stalk is quite mobile in the ribosome, and is involved in E site tRNA release. Protein L1 is also a translational repressor protein, it controls the translation of the L11 operon by binding to its mRNA. This is Large ribosomal subunit protein uL1 from Prochlorococcus marinus (strain MIT 9211).